We begin with the raw amino-acid sequence, 1060 residues long: Protein FAM184B (1060 aa).

Residues 1-17 show a composition bias toward polar residues; the sequence is MASALNSKINPPGTCQG. Positions 1-24 are disordered; it reads MASALNSKINPPGTCQGSKADGGA. Residues 51-159 are a coiled coil; it reads ALNTRQDEAE…EMLELKADYE (109 aa). A disordered region spans residues 165-191; that stretch reads LTSHEATPQGRLPQESPETKSEPGQGP. Coiled-coil stretches lie at residues 192-333 and 402-502; these read EMQE…DRMM and MKQQ…RLEE. Disordered regions lie at residues 532 to 566, 681 to 700, and 762 to 803; these read QDPC…EERT, TEER…HQTH, and GRQQ…GSGE. Basic and acidic residues-rich tracts occupy residues 536-554, 681-690, and 773-785; these read LKLD…KLAA, TEERLKKESS, and DSKD…EERG. Residues 584-769 are a coiled coil; sequence LKEKTSKIQR…ALGRQQASSQ (186 aa). A coiled-coil region spans residues 806-934; it reads GLWEENAQLQ…KQLTEERRFH (129 aa). 2 stretches are compositionally biased toward polar residues: residues 994–1009 and 1018–1030; these read SRIN…SLDP and KPNQ…TATR. Residues 994–1050 are disordered; that stretch reads SRINAPPITTSPSLDPSPSCGRTYKPNQSTDAKTATRTPDGETAQAKEVQQKQGSPH.

It belongs to the FAM184 family.

In Homo sapiens (Human), this protein is Protein FAM184B (FAM184B).